The primary structure comprises 121 residues: uncharacterized protein (121 aa).

The interval 100–121 (KSFSNTKDGKKNDDDNNSSSKS) is disordered.

This is an uncharacterized protein from Mycoplasma pneumoniae (strain ATCC 29342 / M129 / Subtype 1) (Mycoplasmoides pneumoniae).